Here is a 401-residue protein sequence, read N- to C-terminus: (1R,4R,5S)-(-)-guaia-6,10(14)-diene synthase (401 aa).

The tract at residues 1–21 is disordered; the sequence is MVKFDSGSESEMTNGDDLHIN. Residues Asp-134 and Glu-139 each coordinate Mg(2+). The DDXXD motif signature appears at 134-138; the sequence is DDQFD. Arg-242 provides a ligand contact to substrate. The Mg(2+) site is built by Asn-288 and Ser-292. Lys-295 lines the substrate pocket. Asp-296 provides a ligand contact to Mg(2+). 375 to 376 is a binding site for substrate; the sequence is RY.

The protein belongs to the terpene synthase family. The cofactor is Mg(2+).

The enzyme catalyses (2E,6E)-farnesyl diphosphate = (1R,4R,5S)-(-)-guaia-6,10(14)-diene + diphosphate. It participates in secondary metabolite biosynthesis; terpenoid biosynthesis. Catalyzes the conversion of (2E,6E)-farnesyl diphosphate (FPP) to yield the bicyclic sesquiterpene guaia-6,10(14)-diene via a 1,10-cyclization, which requires the abstraction of the pyrophosphate from FPP to yield the (E,E)-germacradienyl cation. The only accepted substrate is farnesyl diphosphate (FPP). The protein is (1R,4R,5S)-(-)-guaia-6,10(14)-diene synthase of Fusarium proliferatum (strain ET1) (Orchid endophyte fungus).